A 365-amino-acid polypeptide reads, in one-letter code: Protein BZR1 homolog 2 (365 aa).

The span at 1–30 (MATGGGGGGGGMGGGGVGGGAGAAGVGVGG) shows a compositional bias: gly residues. Disordered regions lie at residues 1 to 45 (MATG…KRRE), 113 to 154 (SPSP…NMAN), 191 to 236 (SAPV…TPPS), and 344 to 365 (HEDS…RAAA). The required for DNA-binding stretch occupies residues 31–113 (RMPTWREREN…RMEVIGCSVS (83 aa)). A compositionally biased stretch (low complexity) spans 113-144 (SPSPCSSYQPSPRASYNASPTSSSFPSGASSP). Composition is skewed to polar residues over residues 215–233 (SNVQ…VNST) and 356–365 (LGSSRTRAAA).

This sequence belongs to the BZR/LAT61 family. As to quaternary structure, interacts with PUB24.

May function in brassinosteroid signaling. The protein is Protein BZR1 homolog 2 of Oryza sativa subsp. japonica (Rice).